We begin with the raw amino-acid sequence, 184 residues long: uncharacterized protein (184 aa).

This is an uncharacterized protein from Archaeoglobus fulgidus (strain ATCC 49558 / DSM 4304 / JCM 9628 / NBRC 100126 / VC-16).